The following is a 931-amino-acid chain: Protocadherin gamma-B2 (931 aa).

The first 30 residues, 1–30 (MKASSGRCGLVRWLQVLLPFLLSLFPGALP), serve as a signal peptide directing secretion. 6 consecutive Cadherin domains span residues 31 to 133 (VQIR…TPLF), 134 to 242 (KQTK…PPVF), 243 to 347 (SQDV…APEV), 348 to 452 (IVTS…APVF), 453 to 562 (QQTS…APRV), and 570 to 675 (DGSA…LPDL). At 31–691 (VQIRYSIPEE…SDPQAKLQFY (661 aa)) the chain is on the extracellular side. N-linked (GlcNAc...) asparagine glycosylation is found at Asn419 and Asn545. Residues 692–712 (LVVALALISVLFFLAVILAIS) form a helical membrane-spanning segment. Topologically, residues 713–931 (LRLRLSSRSD…KKKSGKKEKK (219 aa)) are cytoplasmic. Disordered stretches follow at residues 814–840 (DWRF…WPNN) and 901–931 (ATLT…KEKK). Polar residues predominate over residues 815 to 840 (WRFSQAQRPGTSGSQNGDDTGTWPNN). Over residues 921–931 (NKKKSGKKEKK) the composition is skewed to basic residues.

Its subcellular location is the cell membrane. Potential calcium-dependent cell-adhesion protein. May be involved in the establishment and maintenance of specific neuronal connections in the brain. This is Protocadherin gamma-B2 (PCDHGB2) from Homo sapiens (Human).